The chain runs to 79 residues: U-actitoxin-Avd8a (79 aa).

An N-terminal signal peptide occupies residues 1–19 (MKSLVIVFVVLLGVAMISA). Positions 20-36 (NEEELLAILQDQRNDAR) are excised as a propeptide.

Belongs to the sea anemone 8 toxin family.

The protein localises to the secreted. It is found in the nematocyst. The chain is U-actitoxin-Avd8a from Anemonia viridis (Snakelocks anemone).